Here is a 179-residue protein sequence, read N- to C-terminus: NADH-quinone oxidoreductase subunit B (179 aa).

Residues cysteine 52, cysteine 53, cysteine 117, and cysteine 147 each coordinate [4Fe-4S] cluster.

The protein belongs to the complex I 20 kDa subunit family. NDH-1 is composed of 14 different subunits. Subunits NuoB, C, D, E, F, and G constitute the peripheral sector of the complex. [4Fe-4S] cluster serves as cofactor.

It localises to the cell inner membrane. The catalysed reaction is a quinone + NADH + 5 H(+)(in) = a quinol + NAD(+) + 4 H(+)(out). Its function is as follows. NDH-1 shuttles electrons from NADH, via FMN and iron-sulfur (Fe-S) centers, to quinones in the respiratory chain. The immediate electron acceptor for the enzyme in this species is believed to be ubiquinone. Couples the redox reaction to proton translocation (for every two electrons transferred, four hydrogen ions are translocated across the cytoplasmic membrane), and thus conserves the redox energy in a proton gradient. The polypeptide is NADH-quinone oxidoreductase subunit B (Ehrlichia chaffeensis (strain ATCC CRL-10679 / Arkansas)).